A 482-amino-acid chain; its full sequence is UDP-N-acetylmuramate--L-alanine ligase (482 aa).

ATP is bound at residue 129 to 135 (GTHGKTT).

Belongs to the MurCDEF family.

It localises to the cytoplasm. The catalysed reaction is UDP-N-acetyl-alpha-D-muramate + L-alanine + ATP = UDP-N-acetyl-alpha-D-muramoyl-L-alanine + ADP + phosphate + H(+). It participates in cell wall biogenesis; peptidoglycan biosynthesis. Functionally, cell wall formation. This Acinetobacter baumannii (strain AB307-0294) protein is UDP-N-acetylmuramate--L-alanine ligase.